The chain runs to 344 residues: N-acetyl-gamma-glutamyl-phosphate reductase (344 aa).

Cys148 is a catalytic residue.

This sequence belongs to the NAGSA dehydrogenase family. Type 1 subfamily.

It localises to the cytoplasm. The enzyme catalyses N-acetyl-L-glutamate 5-semialdehyde + phosphate + NADP(+) = N-acetyl-L-glutamyl 5-phosphate + NADPH + H(+). The protein operates within amino-acid biosynthesis; L-arginine biosynthesis; N(2)-acetyl-L-ornithine from L-glutamate: step 3/4. In terms of biological role, catalyzes the NADPH-dependent reduction of N-acetyl-5-glutamyl phosphate to yield N-acetyl-L-glutamate 5-semialdehyde. The sequence is that of N-acetyl-gamma-glutamyl-phosphate reductase from Clostridium beijerinckii (strain ATCC 51743 / NCIMB 8052) (Clostridium acetobutylicum).